The sequence spans 399 residues: Elongation factor Tu (399 aa).

The 195-residue stretch at 10–204 (KPHVNIGTIG…AVDEAIPEPE (195 aa)) folds into the tr-type G domain. The interval 19–26 (GHVDHGKT) is G1. 19 to 26 (GHVDHGKT) serves as a coordination point for GTP. T26 serves as a coordination point for Mg(2+). Positions 60–64 (GITIN) are G2. A G3 region spans residues 81 to 84 (DCPG). GTP contacts are provided by residues 81–85 (DCPGH) and 136–139 (NKCD). The G4 stretch occupies residues 136–139 (NKCD). The tract at residues 174–176 (SGL) is G5.

Belongs to the TRAFAC class translation factor GTPase superfamily. Classic translation factor GTPase family. EF-Tu/EF-1A subfamily. In terms of assembly, monomer.

The protein localises to the cytoplasm. It carries out the reaction GTP + H2O = GDP + phosphate + H(+). GTP hydrolase that promotes the GTP-dependent binding of aminoacyl-tRNA to the A-site of ribosomes during protein biosynthesis. This is Elongation factor Tu from Parasynechococcus marenigrum (strain WH8102).